Reading from the N-terminus, the 283-residue chain is Bifunctional protein FolD (283 aa).

NADP(+)-binding positions include 164–166 and serine 189; that span reads GRS.

Belongs to the tetrahydrofolate dehydrogenase/cyclohydrolase family. As to quaternary structure, homodimer.

The catalysed reaction is (6R)-5,10-methylene-5,6,7,8-tetrahydrofolate + NADP(+) = (6R)-5,10-methenyltetrahydrofolate + NADPH. It carries out the reaction (6R)-5,10-methenyltetrahydrofolate + H2O = (6R)-10-formyltetrahydrofolate + H(+). The protein operates within one-carbon metabolism; tetrahydrofolate interconversion. Catalyzes the oxidation of 5,10-methylenetetrahydrofolate to 5,10-methenyltetrahydrofolate and then the hydrolysis of 5,10-methenyltetrahydrofolate to 10-formyltetrahydrofolate. This chain is Bifunctional protein FolD, found in Lactobacillus acidophilus (strain ATCC 700396 / NCK56 / N2 / NCFM).